A 449-amino-acid polypeptide reads, in one-letter code: Glucose-6-phosphate isomerase (449 aa).

Glutamate 290 functions as the Proton donor in the catalytic mechanism. Active-site residues include histidine 311 and lysine 425.

Belongs to the GPI family.

It localises to the cytoplasm. It carries out the reaction alpha-D-glucose 6-phosphate = beta-D-fructose 6-phosphate. Its pathway is carbohydrate biosynthesis; gluconeogenesis. It functions in the pathway carbohydrate degradation; glycolysis; D-glyceraldehyde 3-phosphate and glycerone phosphate from D-glucose: step 2/4. Functionally, catalyzes the reversible isomerization of glucose-6-phosphate to fructose-6-phosphate. This chain is Glucose-6-phosphate isomerase, found in Clostridioides difficile (strain 630) (Peptoclostridium difficile).